Reading from the N-terminus, the 287-residue chain is Large ribosomal subunit protein uL2 (287 aa).

The interval 221-287 (RGSVMNPCDH…SKRSRGGRDS (67 aa)) is disordered. Basic residues predominate over residues 258–287 (KTRKKNKPSNKLVVRRRRRISKRSRGGRDS).

Belongs to the universal ribosomal protein uL2 family. In terms of assembly, part of the 50S ribosomal subunit. Forms a bridge to the 30S subunit in the 70S ribosome.

Functionally, one of the primary rRNA binding proteins. Required for association of the 30S and 50S subunits to form the 70S ribosome, for tRNA binding and peptide bond formation. It has been suggested to have peptidyltransferase activity; this is somewhat controversial. Makes several contacts with the 16S rRNA in the 70S ribosome. This is Large ribosomal subunit protein uL2 from Prochlorococcus marinus (strain MIT 9301).